Reading from the N-terminus, the 148-residue chain is Aspartate carbamoyltransferase regulatory chain (148 aa).

The Zn(2+) site is built by Cys-106, Cys-111, Cys-134, and Cys-137.

Belongs to the PyrI family. In terms of assembly, contains catalytic and regulatory chains. The cofactor is Zn(2+).

In terms of biological role, involved in allosteric regulation of aspartate carbamoyltransferase. The sequence is that of Aspartate carbamoyltransferase regulatory chain from Methanococcus maripaludis (strain C7 / ATCC BAA-1331).